The sequence spans 232 residues: Large ribosomal subunit protein uL1 (232 aa).

The protein belongs to the universal ribosomal protein uL1 family. As to quaternary structure, part of the 50S ribosomal subunit.

Binds directly to 23S rRNA. The L1 stalk is quite mobile in the ribosome, and is involved in E site tRNA release. Its function is as follows. Protein L1 is also a translational repressor protein, it controls the translation of the L11 operon by binding to its mRNA. In Ruegeria sp. (strain TM1040) (Silicibacter sp.), this protein is Large ribosomal subunit protein uL1.